A 207-amino-acid polypeptide reads, in one-letter code: Thymidylate kinase (207 aa).

7-14 provides a ligand contact to ATP; the sequence is GCEGTGKT.

The protein belongs to the thymidylate kinase family.

It carries out the reaction dTMP + ATP = dTDP + ADP. Phosphorylation of dTMP to form dTDP in both de novo and salvage pathways of dTTP synthesis. This Onion yellows phytoplasma (strain OY-M) protein is Thymidylate kinase.